Reading from the N-terminus, the 709-residue chain is Ribosomal RNA large subunit methyltransferase K/L (709 aa).

Positions 43–154 (LAYRITLWTR…NGVITIAMNF (112 aa)) constitute a THUMP domain.

This sequence belongs to the methyltransferase superfamily. RlmKL family.

Its subcellular location is the cytoplasm. It carries out the reaction guanosine(2445) in 23S rRNA + S-adenosyl-L-methionine = N(2)-methylguanosine(2445) in 23S rRNA + S-adenosyl-L-homocysteine + H(+). The enzyme catalyses guanosine(2069) in 23S rRNA + S-adenosyl-L-methionine = N(2)-methylguanosine(2069) in 23S rRNA + S-adenosyl-L-homocysteine + H(+). Specifically methylates the guanine in position 2445 (m2G2445) and the guanine in position 2069 (m7G2069) of 23S rRNA. This Shewanella baltica (strain OS195) protein is Ribosomal RNA large subunit methyltransferase K/L.